The primary structure comprises 145 residues: uncharacterized protein (145 aa).

A dksA C4-type zinc finger spans residues 86–110 (CERCGEEIPEPRLCAIPWTRYCAKC).

This is an uncharacterized protein from Aquifex aeolicus (strain VF5).